The sequence spans 120 residues: Succinate dehydrogenase membrane anchor subunit (120 aa).

The Mitochondrial matrix segment spans residues 1 to 17 (MTEKLLHFIRTKSGSMH). Residues 18-38 (WWLQRFLAILLAPIILYLLFD) traverse the membrane as a helical segment. At 39 to 63 (VAIYIGQQSDPTVMMFLNRIFNHNS) the chain is on the mitochondrial intermembrane side. Residues 64 to 85 (IFIFITSVILIWHVRGGMEVII) form a helical membrane-spanning segment. Position 76 (H76) interacts with heme. Residues 86–95 (EDYVHGEKTR) are Mitochondrial matrix-facing. Y88 is a binding site for a ubiquinone. Residues 96 to 120 (IVSIFLIRVIAIEIMEYLYKCSIIF) traverse the membrane as a helical segment.

Part of an enzyme complex containing four subunits: a flavoprotein, an iron-sulfur protein, plus two membrane-anchoring proteins. Heme serves as cofactor.

It localises to the mitochondrion inner membrane. It participates in carbohydrate metabolism; tricarboxylic acid cycle. Functionally, membrane-anchoring subunit of succinate dehydrogenase (SDH). The polypeptide is Succinate dehydrogenase membrane anchor subunit (SDH4) (Reclinomonas americana).